The sequence spans 356 residues: MYHLLLRVMFRLPPERIHHLAFAAMRLVTRFSPLRQLVGRVLVVDDPVLRNTVFGLDFPAPLGLAAGFDKDATGVDAWGPLGFGFAEVGTVTAQAQPGNPAPRLFRLPADRALINRMGFNNHGAGNAANHLRQRRAGVPIGANIGKTKIVDAADAPADYTASAHLLGPLADFMVVNVSSPNTPGLRDLQAVESLRPLLRAVLDSVTVPVLVKIAPDLSDDDVDAVADLALELGLAGIVATNTTIRRDGLNTPDDEVTAIGAGGLSGPPVAERSLEVLRRLHARVGDRLVLISVGGIETVDQAWERILAGASLVQGYTGFIYGGPFWARRIHKGLARKVREAGYSSVADAVGAGAVR.

Residues 66–70 and Thr-90 contribute to the FMN site; that span reads AGFDK. Lys-70 is a substrate binding site. 115 to 119 is a binding site for substrate; sequence NRMGF. FMN contacts are provided by Asn-143 and Asn-176. Asn-176 provides a ligand contact to substrate. Ser-179 acts as the Nucleophile in catalysis. Position 181 (Asn-181) interacts with substrate. 2 residues coordinate FMN: Lys-212 and Thr-240. Position 241–242 (241–242) interacts with substrate; that stretch reads NT. FMN contacts are provided by residues Gly-266, Gly-295, and 316–317; that span reads YT.

This sequence belongs to the dihydroorotate dehydrogenase family. Type 2 subfamily. Monomer. FMN serves as cofactor.

The protein resides in the cell membrane. It carries out the reaction (S)-dihydroorotate + a quinone = orotate + a quinol. It functions in the pathway pyrimidine metabolism; UMP biosynthesis via de novo pathway; orotate from (S)-dihydroorotate (quinone route): step 1/1. In terms of biological role, catalyzes the conversion of dihydroorotate to orotate with quinone as electron acceptor. The protein is Dihydroorotate dehydrogenase (quinone) of Rhodococcus opacus (strain B4).